Here is a 96-residue protein sequence, read N- to C-terminus: HIG1 domain family member 1C (96 aa).

Topologically, residues 1–26 (MSSDEWSAAEDEGQLSRLLRKSRDSP) are cytoplasmic. The HIG1 domain maps to 1 to 91 (MSSDEWSAAE…YKDYIRPRFF (91 aa)). A helical transmembrane segment spans residues 27–44 (FVPVGMAGFVAVLSYGLY). At 45–58 (KLNSRREQKMSLHL) the chain is on the extracellular side. A helical transmembrane segment spans residues 59 to 81 (IHVRVAAQGCVVGAVTLGVLYSM). Residues 82–96 (YKDYIRPRFFNVPKK) lie on the Cytoplasmic side of the membrane.

It is found in the membrane. The chain is HIG1 domain family member 1C (Higd1c) from Mus musculus (Mouse).